Consider the following 479-residue polypeptide: Variant surface glycoprotein ILTAT 1.22 (479 aa).

Residues 1–12 form the signal peptide; it reads MDTAQVFALFYM. Residues N120 and N458 are each glycosylated (N-linked (GlcNAc...) asparagine). The GPI-anchor amidated asparagine moiety is linked to residue N462. The propeptide at 463–479 is removed in mature form; sequence NSFAIKTSTLLLAVLLF.

Its subcellular location is the cell membrane. Functionally, VSG forms a coat on the surface of the parasite. The trypanosome evades the immune response of the host by expressing a series of antigenically distinct VSGs from an estimated 1000 VSG genes. The chain is Variant surface glycoprotein ILTAT 1.22 from Trypanosoma brucei brucei.